A 238-amino-acid chain; its full sequence is Histone deacetylase 7 (238 aa).

Disordered stretches follow at residues 1–26 and 47–72; these read TPGS…PEPA and QQQR…GQQE. The interval 58–158 is interaction with MEF2A; the sequence is SMDPPLPELQ…LPTEPPEHFP (101 aa). A phosphoserine mark is found at S118 and S164. The interval 145 to 238 is disordered; it reads PVPSLPTEPP…NPALGSEADG (94 aa). The span at 176-190 shows a compositional bias: basic and acidic residues; the sequence is KSLERRKNPLLRKES. Position 190 is a phosphoserine; by PKD/PRKD2 (S190). Residues 206-221 show a composition bias toward low complexity; the sequence is SSPSSSSTPASGCSSP.

This sequence belongs to the histone deacetylase family. HD type 2 subfamily. As to quaternary structure, interacts with HDAC1, HDAC2, HDAC3, HDAC4, HDAC5, NCOR1, NCOR2, SIN3A, SIN3B, RBBP4, RBBP7, MTA1L1, SAP30 and MBD3. Interacts with KAT5 and EDNRA. Interacts with the 14-3-3 protein YWHAE, MEF2A, MEF2B and MEF2C. Interacts with ZMYND15. Interacts with KDM5B. Interacts with PML. Interacts with FOXP3. Interacts with RARA. Post-translationally, may be phosphorylated by CaMK1. Phosphorylated by the PKC kinases PKN1 and PKN2, impairing nuclear import. Phosphorylation at Ser-164 by MARK2, MARK3 and PRKD1 promotes interaction with 14-3-3 proteins and export from the nucleus. Phosphorylation at Ser-164 is a prerequisite for phosphorylation at Ser-190.

Its subcellular location is the nucleus. It is found in the cytoplasm. The catalysed reaction is N(6)-acetyl-L-lysyl-[histone] + H2O = L-lysyl-[histone] + acetate. It carries out the reaction N(6)-acetyl-L-lysyl-[protein] + H2O = L-lysyl-[protein] + acetate. In terms of biological role, responsible for the deacetylation of lysine residues on the N-terminal part of the core histones (H2A, H2B, H3 and H4). Histone deacetylation gives a tag for epigenetic repression and plays an important role in transcriptional regulation, cell cycle progression and developmental events. Histone deacetylases act via the formation of large multiprotein complexes. Involved in muscle maturation by repressing transcription of myocyte enhancer factors such as MEF2A, MEF2B and MEF2C. During muscle differentiation, it shuttles into the cytoplasm, allowing the expression of myocyte enhancer factors. May be involved in Epstein-Barr virus (EBV) latency, possibly by repressing the viral BZLF1 gene. Positively regulates the transcriptional repressor activity of FOXP3. Serves as a corepressor of RARA, causing its deacetylation and inhibition of RARE DNA element binding. In association with RARA, plays a role in the repression of microRNA-10a and thereby in the inflammatory response. Also acetylates non-histone proteins, such as ALKBH5. This chain is Histone deacetylase 7 (Hdac7), found in Rattus norvegicus (Rat).